A 559-amino-acid polypeptide reads, in one-letter code: Dihydroxy-acid dehydratase (559 aa).

Cys-56 contributes to the [2Fe-2S] cluster binding site. Residue Asp-88 participates in Mg(2+) binding. Residue Cys-129 participates in [2Fe-2S] cluster binding. 2 residues coordinate Mg(2+): Asp-130 and Lys-131. Lys-131 bears the N6-carboxylysine mark. A [2Fe-2S] cluster-binding site is contributed by Cys-198. Glu-449 contributes to the Mg(2+) binding site. Ser-475 functions as the Proton acceptor in the catalytic mechanism.

It belongs to the IlvD/Edd family. Homodimer. [2Fe-2S] cluster is required as a cofactor. The cofactor is Mg(2+).

It catalyses the reaction (2R)-2,3-dihydroxy-3-methylbutanoate = 3-methyl-2-oxobutanoate + H2O. It carries out the reaction (2R,3R)-2,3-dihydroxy-3-methylpentanoate = (S)-3-methyl-2-oxopentanoate + H2O. The protein operates within amino-acid biosynthesis; L-isoleucine biosynthesis; L-isoleucine from 2-oxobutanoate: step 3/4. Its pathway is amino-acid biosynthesis; L-valine biosynthesis; L-valine from pyruvate: step 3/4. Its function is as follows. Functions in the biosynthesis of branched-chain amino acids. Catalyzes the dehydration of (2R,3R)-2,3-dihydroxy-3-methylpentanoate (2,3-dihydroxy-3-methylvalerate) into 2-oxo-3-methylpentanoate (2-oxo-3-methylvalerate) and of (2R)-2,3-dihydroxy-3-methylbutanoate (2,3-dihydroxyisovalerate) into 2-oxo-3-methylbutanoate (2-oxoisovalerate), the penultimate precursor to L-isoleucine and L-valine, respectively. In Ruthia magnifica subsp. Calyptogena magnifica, this protein is Dihydroxy-acid dehydratase.